A 75-amino-acid chain; its full sequence is UPF0150 protein TM_1313 (75 aa).

It belongs to the UPF0150 family.

The sequence is that of UPF0150 protein TM_1313 from Thermotoga maritima (strain ATCC 43589 / DSM 3109 / JCM 10099 / NBRC 100826 / MSB8).